The chain runs to 380 residues: Anhydro-N-acetylmuramic acid kinase (380 aa).

9–16 (GTSADGVD) contacts ATP.

Belongs to the anhydro-N-acetylmuramic acid kinase family.

The catalysed reaction is 1,6-anhydro-N-acetyl-beta-muramate + ATP + H2O = N-acetyl-D-muramate 6-phosphate + ADP + H(+). The protein operates within amino-sugar metabolism; 1,6-anhydro-N-acetylmuramate degradation. It participates in cell wall biogenesis; peptidoglycan recycling. Catalyzes the specific phosphorylation of 1,6-anhydro-N-acetylmuramic acid (anhMurNAc) with the simultaneous cleavage of the 1,6-anhydro ring, generating MurNAc-6-P. Is required for the utilization of anhMurNAc either imported from the medium or derived from its own cell wall murein, and thus plays a role in cell wall recycling. The chain is Anhydro-N-acetylmuramic acid kinase from Synechococcus sp. (strain CC9902).